A 210-amino-acid polypeptide reads, in one-letter code: MEHHKTYHSANIKTATGSLLIEGPVSPEDLAGYEFHKDLTAFRPPREQHEALVDIAGLPEGRIIIARDGRTIVGYVTYLYPDPLERWSEGNMEDLIELGAIEVAPDYRGCAVGKTLLTVSMMDEQMENYIVMTTEYYWHWDLKGMKKDVWEYRKIMEKMMNAGGLVWFATDEPEISSHPANCLMARIGKNVSQESIEQFDRLRFYHRYMY.

Residues 20 to 161 (LIEGPVSPED…YRKIMEKMMN (142 aa)) enclose the N-acetyltransferase domain.

Belongs to the acetyltransferase family. In terms of assembly, monomer.

It participates in ketone degradation; acetoin degradation. Its activity is regulated as follows. Activity is sensitive to salt concentration, a high concentration of KCL (500 mM) is needed for complete inactivation. Part of the acuABC operon, which is possibly involved in the breakdown of acetoin and butanediol. Acts as an acetyltransferase inactivating acetyl-CoA synthetase AcsA via acetylation at a Lys residue. This is Acetoin utilization protein AcuA (acuA) from Bacillus subtilis (strain 168).